A 446-amino-acid polypeptide reads, in one-letter code: Maltoporin (446 aa).

The N-terminal stretch at 1–25 (MMITLRKLPLAVAVAAGVMSAQAMA) is a signal peptide.

Belongs to the porin LamB (TC 1.B.3) family. Homotrimer formed of three 18-stranded antiparallel beta-barrels, containing three independent channels.

Its subcellular location is the cell outer membrane. The catalysed reaction is beta-maltose(in) = beta-maltose(out). In terms of biological role, involved in the transport of maltose and maltodextrins. In Escherichia coli O7:K1 (strain IAI39 / ExPEC), this protein is Maltoporin.